The chain runs to 37 residues: Cytochrome b6-f complex subunit 5 (37 aa).

Residues 5–25 (LLFGIVLGLIPITLAGLFVTA) traverse the membrane as a helical segment.

It belongs to the PetG family. In terms of assembly, the 4 large subunits of the cytochrome b6-f complex are cytochrome b6, subunit IV (17 kDa polypeptide, PetD), cytochrome f and the Rieske protein, while the 4 small subunits are PetG, PetL, PetM and PetN. The complex functions as a dimer.

The protein localises to the plastid. The protein resides in the chloroplast thylakoid membrane. Functionally, component of the cytochrome b6-f complex, which mediates electron transfer between photosystem II (PSII) and photosystem I (PSI), cyclic electron flow around PSI, and state transitions. PetG is required for either the stability or assembly of the cytochrome b6-f complex. This is Cytochrome b6-f complex subunit 5 from Lemna minor (Common duckweed).